The sequence spans 139 residues: Small ribosomal subunit protein bS6 (139 aa).

The disordered stretch occupies residues 120–139 (KGASKVETPTGPESTDIQEK). Over residues 130–139 (GPESTDIQEK) the composition is skewed to polar residues.

It belongs to the bacterial ribosomal protein bS6 family.

Functionally, binds together with bS18 to 16S ribosomal RNA. The protein is Small ribosomal subunit protein bS6 (rpsF) of Borreliella burgdorferi (strain ATCC 35210 / DSM 4680 / CIP 102532 / B31) (Borrelia burgdorferi).